We begin with the raw amino-acid sequence, 283 residues long: Zinc import ATP-binding protein ZnuC (283 aa).

Residues 13–228 form the ABC transporter domain; sequence VEMRNAGVHR…PEYVRLFGAR (216 aa). Residue 45–52 participates in ATP binding; it reads GPNGSGKS. Residues 264–283 form a disordered region; the sequence is HHHDHARDGGQGGGGHGHAG. Over residues 272–283 the composition is skewed to gly residues; that stretch reads GGQGGGGHGHAG.

The protein belongs to the ABC transporter superfamily. Zinc importer (TC 3.A.1.15.5) family. In terms of assembly, the complex is composed of two ATP-binding proteins (ZnuC), two transmembrane proteins (ZnuB) and a solute-binding protein (ZnuA).

The protein resides in the cell inner membrane. The enzyme catalyses Zn(2+)(out) + ATP(in) + H2O(in) = Zn(2+)(in) + ADP(in) + phosphate(in) + H(+)(in). Part of the ABC transporter complex ZnuABC involved in zinc import. Responsible for energy coupling to the transport system. The polypeptide is Zinc import ATP-binding protein ZnuC (Chelativorans sp. (strain BNC1)).